A 510-amino-acid chain; its full sequence is Pentatricopeptide repeat-containing protein At1g71060, mitochondrial (510 aa).

A mitochondrion-targeting transit peptide spans 1–14 (MVFSRFFRVTGVNL). 10 PPR repeats span residues 127–157 (TTSN…MKAK), 161–195 (SKET…GFKM), 196–230 (ESSD…RFEP), 231–265 (DIKS…GFEP), 266–300 (DVVA…NCKP), 301–335 (SPHI…GFPL), 336–370 (EAPT…GVGP), 371–401 (NART…MSCE), 403–437 (TVST…GVLP), and 438–472 (GMHM…GIRP).

This sequence belongs to the PPR family. P subfamily.

The protein resides in the mitochondrion. This is Pentatricopeptide repeat-containing protein At1g71060, mitochondrial from Arabidopsis thaliana (Mouse-ear cress).